Reading from the N-terminus, the 587-residue chain is Dynein axonemal intermediate chain 2 (587 aa).

WD repeat units lie at residues 214–254 (RPAS…NPVE), 261–302 (SHRD…EPTE), 362–401 (GHHGPIYSIQRNPFFPKNFLTVGDWTARIWSEDCRESSIM), and 405–445 (YHTS…NNPS). Disordered stretches follow at residues 519 to 542 (LKERSKAEPGEEVKDEKPAEDMKE) and 562 to 587 (KEQQEIKQSEDEHQEKEVSEEKIVHE).

This sequence belongs to the dynein intermediate chain family. As to quaternary structure, consists of at least two heavy chains and a number of intermediate and light chains. Interacts with DNAAF2. Interacts with DNAAF6/PIH1D3. Interacts with HEATR2; probably involved in outer arm dynein assembly. Interacts with C16ORF71/DAAP1.

It is found in the cytoplasm. The protein localises to the cytoskeleton. Its subcellular location is the cilium axoneme. It localises to the dynein axonemal particle. Part of the dynein complex of multiciliated cell cilia. The chain is Dynein axonemal intermediate chain 2 (dnai2) from Xenopus laevis (African clawed frog).